A 117-amino-acid chain; its full sequence is Large ribosomal subunit protein eL8 (117 aa).

The protein belongs to the eukaryotic ribosomal protein eL8 family. Part of the 50S ribosomal subunit. Part of the RNase P complex.

It is found in the cytoplasm. It catalyses the reaction Endonucleolytic cleavage of RNA, removing 5'-extranucleotides from tRNA precursor.. Its function is as follows. Multifunctional RNA-binding protein that recognizes the K-turn motif in ribosomal RNA, the RNA component of RNase P, box H/ACA, box C/D and box C'/D' sRNAs. Part of ribonuclease P, a protein complex that generates mature tRNA molecules by cleaving their 5'-ends, this subunit dramatically stimulates RNase P activity. This chain is Large ribosomal subunit protein eL8, found in Methanococcus maripaludis (strain DSM 14266 / JCM 13030 / NBRC 101832 / S2 / LL).